The primary structure comprises 357 residues: Protein RecA (357 aa).

Position 67 to 74 (67 to 74 (GPESSGKT)) interacts with ATP.

Belongs to the RecA family.

The protein localises to the cytoplasm. Functionally, can catalyze the hydrolysis of ATP in the presence of single-stranded DNA, the ATP-dependent uptake of single-stranded DNA by duplex DNA, and the ATP-dependent hybridization of homologous single-stranded DNAs. It interacts with LexA causing its activation and leading to its autocatalytic cleavage. The chain is Protein RecA from Shewanella oneidensis (strain ATCC 700550 / JCM 31522 / CIP 106686 / LMG 19005 / NCIMB 14063 / MR-1).